Consider the following 139-residue polypeptide: Toxin FitB (139 aa).

A PINc domain is found at 2-123 (ILLDTNVISE…HSLTVATRDT (122 aa)). Mg(2+) contacts are provided by Asp5 and Asp104.

It belongs to the PINc/VapC protein family. Forms a heterodimer with FitA, 4 FitAB heterodimers form a complex that binds to promoter DNA. The complex is also seen in solution. This protein does not actually contact DNA. It depends on Mg(2+) as a cofactor.

In terms of biological role, toxic component of a type II toxin-antitoxin (TA) system. Plays a role in the speed with which bacteria traverse human epithelial cells; disruption of the locus increases the speed of trafficking about 2-4-fold. FitAB binds to its own promoter better than FitA alone. The expected nuclease activity was not observed for the FitAB complex, perhaps because FitA (the antitoxin) prevents metal binding and thus catalysis by FitB. This Neisseria gonorrhoeae (strain ATCC 700825 / FA 1090) protein is Toxin FitB (fitB).